A 321-amino-acid polypeptide reads, in one-letter code: Mechanosensory protein 3 (321 aa).

LIM zinc-binding domains lie at 27–86 and 87–152; these read NKCN…DHSI and HRCA…QMDD. A DNA-binding region (homeobox) is located at residues 217 to 276; it reads RRGPRTTIKQNQLDVLNEMFSNTPKPSKHARAKLALETGLSMRVIQVWFQNRRSKERRLK.

Interacts with unc-86; the heterooligomer binds to the promoters of mec-3, mec-4 and mec-7. Expressed in the mechanosensory neurons ALML, ALMR, PLML, PLMR, AVM and PVM, and the FLPL and FLPR neurons.

Its subcellular location is the nucleus. In terms of biological role, transcription factor. Specifies differentiation of the set of six touch receptor neurons (TRNs). May positively modulate expression of both its own gene and also of homeobox ARX homolog alr-1 in TRNs, forming a positive feedback loop with alr-1, thereby restricting the variability of expression of mec-3. Required to determine the identity of ALM sensory neurons, acting by interacting with unc-86, thereby preventing unc-86 cooperating with pag-3 to induce BDU-neuron specific genes. Binds cooperatively as a heterodimer with unc-86 to sites in the mec-3 gene promoter. Promotes outgrowth of lateral dendritic branches on the PVD nociceptive neurons, probably acting both directly, and upstream of zinc finger protein egl-46. This chain is Mechanosensory protein 3 (mec-3), found in Caenorhabditis elegans.